The chain runs to 223 residues: Deoxyribose-phosphate aldolase (223 aa).

Catalysis depends on Asp-91, which acts as the Proton donor/acceptor. Lys-154 (schiff-base intermediate with acetaldehyde) is an active-site residue. Lys-183 serves as the catalytic Proton donor/acceptor.

This sequence belongs to the DeoC/FbaB aldolase family. DeoC type 1 subfamily.

It is found in the cytoplasm. It catalyses the reaction 2-deoxy-D-ribose 5-phosphate = D-glyceraldehyde 3-phosphate + acetaldehyde. Its pathway is carbohydrate degradation; 2-deoxy-D-ribose 1-phosphate degradation; D-glyceraldehyde 3-phosphate and acetaldehyde from 2-deoxy-alpha-D-ribose 1-phosphate: step 2/2. In terms of biological role, catalyzes a reversible aldol reaction between acetaldehyde and D-glyceraldehyde 3-phosphate to generate 2-deoxy-D-ribose 5-phosphate. In Geobacillus sp. (strain WCH70), this protein is Deoxyribose-phosphate aldolase.